The primary structure comprises 59 residues: Large ribosomal subunit protein uL30 (59 aa).

This sequence belongs to the universal ribosomal protein uL30 family. Part of the 50S ribosomal subunit.

The sequence is that of Large ribosomal subunit protein uL30 from Edwardsiella ictaluri (strain 93-146).